The primary structure comprises 508 residues: Splicing regulatory glutamine/lysine-rich protein 1 (508 aa).

Residues 66–142 (RTVYVGNLNS…RPLKINHSNN (77 aa)) form the RRM domain. A phosphoserine mark is found at Ser171 and Ser184. Residues 173–508 (ISAAIEPESG…ENLSTKTEAV (336 aa)) are disordered. Residues 180–189 (ESGKSNERKG) are compositionally biased toward basic and acidic residues. Over residues 190-259 (GRSRSHTRSK…KSRSRSHSRD (70 aa)) the composition is skewed to basic residues. The segment covering 260 to 355 (KRKDTREKIK…DRSKEIDEKR (96 aa)) has biased composition (basic and acidic residues). At Thr363 the chain carries Phosphothreonine. A compositionally biased stretch (basic residues) spans 372 to 388 (RRSRSSSRERRRRRSRS). Residues 419–488 (REKERDHISE…DAPRTEENKI (70 aa)) show a composition bias toward basic and acidic residues. Polar residues predominate over residues 489–508 (QHNGNCQLNEENLSTKTEAV). Residue Lys504 forms a Glycyl lysine isopeptide (Lys-Gly) (interchain with G-Cter in SUMO2) linkage.

Belongs to the splicing factor SR family. In terms of assembly, homodimer. Binds SFRS1, SFRS2, SFRS3 and SFRS6. Interacts with the spliceosome. Interacts with SREK1IP1.

It is found in the nucleus. In terms of biological role, participates in the regulation of alternative splicing by modulating the activity of other splice facors. Inhibits the splicing activity of SFRS1, SFRS2 and SFRS6. Augments the splicing activity of SFRS3. This Homo sapiens (Human) protein is Splicing regulatory glutamine/lysine-rich protein 1 (SREK1).